We begin with the raw amino-acid sequence, 208 residues long: Probable GTP-binding protein EngB (208 aa).

The EngB-type G domain maps to 22 to 195; the sequence is GLPEIALAGR…WHSIEEIFIA (174 aa). GTP is bound by residues 30-37, 57-61, 75-78, 142-145, and 174-176; these read GRSNVGKS, GKTRT, DLPG, TKSD, and ISS. Mg(2+) is bound by residues S37 and T59.

It belongs to the TRAFAC class TrmE-Era-EngA-EngB-Septin-like GTPase superfamily. EngB GTPase family. Mg(2+) serves as cofactor.

Functionally, necessary for normal cell division and for the maintenance of normal septation. This chain is Probable GTP-binding protein EngB, found in Alkaliphilus oremlandii (strain OhILAs) (Clostridium oremlandii (strain OhILAs)).